Here is a 139-residue protein sequence, read N- to C-terminus: Large ribosomal subunit protein uL16 (139 aa).

The segment covering 1-13 has biased composition (basic residues); that stretch reads MLQPARRKYRKEQ. The segment at 1–23 is disordered; it reads MLQPARRKYRKEQKGRNTGISHS.

Belongs to the universal ribosomal protein uL16 family. In terms of assembly, part of the 50S ribosomal subunit.

Functionally, binds 23S rRNA and is also seen to make contacts with the A and possibly P site tRNAs. In Herminiimonas arsenicoxydans, this protein is Large ribosomal subunit protein uL16.